Here is a 437-residue protein sequence, read N- to C-terminus: Tol-Pal system protein TolB (437 aa).

Positions 1-30 are cleaved as a signal peptide; it reads MLPTPSRSHKLSGYAAVLFFLWLVCSPAQA. Over residues 410–423 the composition is skewed to polar residues; that stretch reads SDGRTRQQLSTQTG. A disordered region spans residues 410–437; that stretch reads SDGRTRQQLSTQTGDIREPAWGPLRRLQ.

Belongs to the TolB family. In terms of assembly, the Tol-Pal system is composed of five core proteins: the inner membrane proteins TolA, TolQ and TolR, the periplasmic protein TolB and the outer membrane protein Pal. They form a network linking the inner and outer membranes and the peptidoglycan layer.

It localises to the periplasm. In terms of biological role, part of the Tol-Pal system, which plays a role in outer membrane invagination during cell division and is important for maintaining outer membrane integrity. This is Tol-Pal system protein TolB from Nitrosospira multiformis (strain ATCC 25196 / NCIMB 11849 / C 71).